Here is a 154-residue protein sequence, read N- to C-terminus: 6,7-dimethyl-8-ribityllumazine synthase (154 aa).

Residues F21, 55 to 57 (AFE), and 79 to 81 (CVI) contribute to the 5-amino-6-(D-ribitylamino)uracil site. 84–85 (AT) provides a ligand contact to (2S)-2-hydroxy-3-oxobutyl phosphate. Residue H87 is the Proton donor of the active site. F112 contributes to the 5-amino-6-(D-ribitylamino)uracil binding site. (2S)-2-hydroxy-3-oxobutyl phosphate is bound at residue R126.

This sequence belongs to the DMRL synthase family. Forms an icosahedral capsid composed of 60 subunits, arranged as a dodecamer of pentamers.

It catalyses the reaction (2S)-2-hydroxy-3-oxobutyl phosphate + 5-amino-6-(D-ribitylamino)uracil = 6,7-dimethyl-8-(1-D-ribityl)lumazine + phosphate + 2 H2O + H(+). The protein operates within cofactor biosynthesis; riboflavin biosynthesis; riboflavin from 2-hydroxy-3-oxobutyl phosphate and 5-amino-6-(D-ribitylamino)uracil: step 1/2. In terms of biological role, catalyzes the formation of 6,7-dimethyl-8-ribityllumazine by condensation of 5-amino-6-(D-ribitylamino)uracil with 3,4-dihydroxy-2-butanone 4-phosphate. This is the penultimate step in the biosynthesis of riboflavin. The polypeptide is 6,7-dimethyl-8-ribityllumazine synthase (Staphylococcus aureus (strain Mu50 / ATCC 700699)).